The primary structure comprises 334 residues: Probable fructose-bisphosphate aldolase class 1 (334 aa).

The protein belongs to the class I fructose-bisphosphate aldolase family.

The catalysed reaction is beta-D-fructose 1,6-bisphosphate = D-glyceraldehyde 3-phosphate + dihydroxyacetone phosphate. The protein operates within carbohydrate degradation; glycolysis; D-glyceraldehyde 3-phosphate and glycerone phosphate from D-glucose: step 4/4. This is Probable fructose-bisphosphate aldolase class 1 from Xanthomonas axonopodis pv. citri (strain 306).